Reading from the N-terminus, the 105-residue chain is Large ribosomal subunit protein uL24 (105 aa).

It belongs to the universal ribosomal protein uL24 family. In terms of assembly, part of the 50S ribosomal subunit.

In terms of biological role, one of two assembly initiator proteins, it binds directly to the 5'-end of the 23S rRNA, where it nucleates assembly of the 50S subunit. Functionally, one of the proteins that surrounds the polypeptide exit tunnel on the outside of the subunit. The polypeptide is Large ribosomal subunit protein uL24 (Aliivibrio salmonicida (strain LFI1238) (Vibrio salmonicida (strain LFI1238))).